Reading from the N-terminus, the 505-residue chain is ATP synthase subunit alpha (505 aa).

169–176 (GDRKTGKT) provides a ligand contact to ATP.

Belongs to the ATPase alpha/beta chains family. As to quaternary structure, F-type ATPases have 2 components, CF(1) - the catalytic core - and CF(0) - the membrane proton channel. CF(1) has five subunits: alpha(3), beta(3), gamma(1), delta(1), epsilon(1). CF(0) has three main subunits: a(1), b(2) and c(9-12). The alpha and beta chains form an alternating ring which encloses part of the gamma chain. CF(1) is attached to CF(0) by a central stalk formed by the gamma and epsilon chains, while a peripheral stalk is formed by the delta and b chains.

The protein localises to the cell membrane. The enzyme catalyses ATP + H2O + 4 H(+)(in) = ADP + phosphate + 5 H(+)(out). Its function is as follows. Produces ATP from ADP in the presence of a proton gradient across the membrane. The alpha chain is a regulatory subunit. The protein is ATP synthase subunit alpha of Leuconostoc mesenteroides subsp. mesenteroides (strain ATCC 8293 / DSM 20343 / BCRC 11652 / CCM 1803 / JCM 6124 / NCDO 523 / NBRC 100496 / NCIMB 8023 / NCTC 12954 / NRRL B-1118 / 37Y).